The primary structure comprises 785 residues: ATP-dependent 6-phosphofructokinase 1 (785 aa).

The segment at methionine 1 to threonine 389 is N-terminal catalytic PFK domain 1. Residues glycine 23, arginine 86–serine 87, and glycine 116–serine 119 each bind ATP. Residue aspartate 117 participates in Mg(2+) binding. Residues serine 162–aspartate 164, arginine 199, methionine 206–arginine 208, glutamate 263, arginine 291, and histidine 297–arginine 300 each bind substrate. The Proton acceptor role is filled by aspartate 164. The segment at proline 390–methionine 403 is interdomain linker. Residues arginine 404 to cysteine 785 form a C-terminal regulatory PFK domain 2 region. Beta-D-fructose 2,6-bisphosphate is bound by residues arginine 480, threonine 537–asparagine 541, arginine 575, glutamine 582–glycine 584, glutamate 642, arginine 668, histidine 674–glutamine 677, and arginine 749.

It belongs to the phosphofructokinase type A (PFKA) family. ATP-dependent PFK group I subfamily. Eukaryotic two domain clade 'E' sub-subfamily. In terms of assembly, homotetramer. Mg(2+) is required as a cofactor.

The protein resides in the cytoplasm. It carries out the reaction beta-D-fructose 6-phosphate + ATP = beta-D-fructose 1,6-bisphosphate + ADP + H(+). It functions in the pathway carbohydrate degradation; glycolysis; D-glyceraldehyde 3-phosphate and glycerone phosphate from D-glucose: step 3/4. With respect to regulation, allosterically activated by ADP, AMP, or fructose 2,6-bisphosphate, and allosterically inhibited by ATP or citrate. Functionally, catalyzes the phosphorylation of D-fructose 6-phosphate to fructose 1,6-bisphosphate by ATP, the first committing step of glycolysis. This chain is ATP-dependent 6-phosphofructokinase 1 (pfkA), found in Aspergillus oryzae (strain ATCC 42149 / RIB 40) (Yellow koji mold).